A 441-amino-acid polypeptide reads, in one-letter code: ATP-dependent protease ATPase subunit HslU (441 aa).

ATP contacts are provided by residues isoleucine 18, 60 to 65, aspartate 254, glutamate 319, and arginine 391; that span reads GVGKTE.

This sequence belongs to the ClpX chaperone family. HslU subfamily. A double ring-shaped homohexamer of HslV is capped on each side by a ring-shaped HslU homohexamer. The assembly of the HslU/HslV complex is dependent on binding of ATP.

The protein localises to the cytoplasm. Its function is as follows. ATPase subunit of a proteasome-like degradation complex; this subunit has chaperone activity. The binding of ATP and its subsequent hydrolysis by HslU are essential for unfolding of protein substrates subsequently hydrolyzed by HslV. HslU recognizes the N-terminal part of its protein substrates and unfolds these before they are guided to HslV for hydrolysis. In Shewanella halifaxensis (strain HAW-EB4), this protein is ATP-dependent protease ATPase subunit HslU.